Here is a 468-residue protein sequence, read N- to C-terminus: MGTSDLRNAPPGTWLPARRLARWIFQPLERFLHVQAASGIVLLIATAVALAWANSPWAASYERLWHTPVRLGVGSYLVERDLHFWINDGLMTIFFFVVGLEIRREIHQGELSVLKRAVLPVAAALGGMLFPALIYLALNPSPPERSGWGVPMATDIAFAVGALALLGNRVPAALRVLLLALAIIDDIGAILVIAVFYSSSISVTGFGLVAVGIAGVLALQRFGVRSPVVYAAAGVVIWAGLLSAGVHPTITGVLLGLLTPVHPWFGEEGFLAEARRALEDFQERATGGHDARELTGPLAQLSQARREALPPVVRLEAALHPWVAYGIMPLFALANAGVSLGDVHLGAAGSTRLLLGVVFGLTMGKPLGIMVACSLSVKLGLAALPRGVLWRGVLVVGCVAGIGFTMAIFVAGLAFGAGQRLGVAKLAVLLGSLISALVAMAVGRLVLRPAEAGQIAATADEAEASTEY.

The next 11 membrane-spanning stretches (helical) occupy residues 31–51 (FLHV…VALA), 82–102 (LHFW…GLEI), 118–138 (VLPV…YLAL), 147–167 (GWGV…ALLG), 176–196 (VLLL…IAVF), 199–219 (SSIS…VLAL), 226–246 (SPVV…SAGV), 321–341 (PWVA…VSLG), 353–373 (LLLG…MVAC), 393–413 (VLVV…VAGL), and 422–442 (GVAK…AMAV).

This sequence belongs to the NhaA Na(+)/H(+) (TC 2.A.33) antiporter family.

The protein localises to the cell inner membrane. It carries out the reaction Na(+)(in) + 2 H(+)(out) = Na(+)(out) + 2 H(+)(in). Na(+)/H(+) antiporter that extrudes sodium in exchange for external protons. The sequence is that of Na(+)/H(+) antiporter NhaA 2 from Sorangium cellulosum (strain So ce56) (Polyangium cellulosum (strain So ce56)).